The primary structure comprises 135 residues: uncharacterized protein (135 aa).

4 helical membrane passes run 7 to 25, 29 to 51, 64 to 85, and 89 to 108; these read WSAA…EWTI, ILLT…TGNI, VFIF…EVGI, and ALIF…ISIF.

It belongs to the bacteriophage holin family. Cp-1 holin subfamily.

The protein localises to the cell membrane. This is an uncharacterized protein from Halalkalibacterium halodurans (strain ATCC BAA-125 / DSM 18197 / FERM 7344 / JCM 9153 / C-125) (Bacillus halodurans).